Here is a 574-residue protein sequence, read N- to C-terminus: Proline--tRNA ligase (574 aa).

The protein belongs to the class-II aminoacyl-tRNA synthetase family. ProS type 1 subfamily. In terms of assembly, homodimer.

Its subcellular location is the cytoplasm. The enzyme catalyses tRNA(Pro) + L-proline + ATP = L-prolyl-tRNA(Pro) + AMP + diphosphate. Its function is as follows. Catalyzes the attachment of proline to tRNA(Pro) in a two-step reaction: proline is first activated by ATP to form Pro-AMP and then transferred to the acceptor end of tRNA(Pro). As ProRS can inadvertently accommodate and process non-cognate amino acids such as alanine and cysteine, to avoid such errors it has two additional distinct editing activities against alanine. One activity is designated as 'pretransfer' editing and involves the tRNA(Pro)-independent hydrolysis of activated Ala-AMP. The other activity is designated 'posttransfer' editing and involves deacylation of mischarged Ala-tRNA(Pro). The misacylated Cys-tRNA(Pro) is not edited by ProRS. In Oleidesulfovibrio alaskensis (strain ATCC BAA-1058 / DSM 17464 / G20) (Desulfovibrio alaskensis), this protein is Proline--tRNA ligase.